A 203-amino-acid chain; its full sequence is Snake venom metalloproteinase atroxase (203 aa).

E1 bears the Pyrrolidone carboxylic acid (Glu) mark. N-linked (GlcNAc...) asparagine glycosylation is present at N5. The Peptidase M12B domain maps to 9-203 (RYIELVVVAD…KQYNPQIXNK (195 aa)). Ca(2+)-binding residues include E12 and D96. H145 contacts Zn(2+). E146 is an active-site residue. Residues H149 and H155 each coordinate Zn(2+). A disulfide bridge links C160 with C167. N202 contacts Ca(2+).

The protein belongs to the venom metalloproteinase (M12B) family. P-I subfamily. Monomer. It depends on Zn(2+) as a cofactor. Post-translationally, the N-terminus is blocked. In terms of tissue distribution, expressed by the venom gland.

Its subcellular location is the secreted. The enzyme catalyses Cleavage of 5-His-|-Leu-6, 9-Ser-|-His-10, 10-His-|-Leu-11, 14-Ala-|-Leu-15 and 16-Tyr-|-Leu-17 in insulin B chain.. Inhibited by EDTA and alpha2-macroglobulin. Snake venom zinc metalloprotease that has Aalpha, Bbeta fibrin(ogen)olytic activities. It cleaves the Aalpha chain of fibrinogen first followed by the Bbeta chain and shows no effect on the gamma chain. Does not induce or inhibit platelet aggregation, and is unable to activate plasminogen. Exhibits low lethality when tested on mice. Intravenous administration results in thrombolysis within one hour followed by recanalization. Fibrinogenolytic activity results in a 60% decrease in the rat's plasma fibrinogen level. Histological examination of kidney, liver, heart and lung tissue shows no necrosis nor hemorrhage. The sequence is that of Snake venom metalloproteinase atroxase from Crotalus atrox (Western diamondback rattlesnake).